Here is a 324-residue protein sequence, read N- to C-terminus: tRNA-cytidine(32) 2-sulfurtransferase (324 aa).

The segment at 1 to 26 is disordered; the sequence is MQDLIDSPTAARTPAEEKIRHEGNKL. The span at 14–26 shows a compositional bias: basic and acidic residues; it reads PAEEKIRHEGNKL. Residues 55–60 carry the PP-loop motif motif; it reads SGGKDS. [4Fe-4S] cluster-binding residues include Cys-130, Cys-133, and Cys-221. Positions 278–310 are disordered; the sequence is RPDANGDTAFDPIDPEDPREDAGDACASSPADG.

This sequence belongs to the TtcA family. Homodimer. It depends on Mg(2+) as a cofactor. The cofactor is [4Fe-4S] cluster.

The protein localises to the cytoplasm. The catalysed reaction is cytidine(32) in tRNA + S-sulfanyl-L-cysteinyl-[cysteine desulfurase] + AH2 + ATP = 2-thiocytidine(32) in tRNA + L-cysteinyl-[cysteine desulfurase] + A + AMP + diphosphate + H(+). Its pathway is tRNA modification. In terms of biological role, catalyzes the ATP-dependent 2-thiolation of cytidine in position 32 of tRNA, to form 2-thiocytidine (s(2)C32). The sulfur atoms are provided by the cysteine/cysteine desulfurase (IscS) system. The sequence is that of tRNA-cytidine(32) 2-sulfurtransferase from Bordetella petrii (strain ATCC BAA-461 / DSM 12804 / CCUG 43448).